Consider the following 1189-residue polypeptide: MSAGGSARKSTGRSSYYYRLLRRPRLQRQRSRSRSRTRPARESPQERPGSRRSLPGSLSEKSPSMEPSAATPFRVTGFLSRRLKGSIKRTKSQPKLDRNHSFRHILPGFRSAAAAAADNERSHLMPRLKESRSHESLLSPSSAVEALDLSMEEEVVIKPVHSSILGQDYCFEVTTSSGSKCFSCRSAAERDKWMENLRRAVHPNKDNSRRVEHILKLWVIEAKDLPAKKKYLCELCLDDVLYARTTGKLKTDNVFWGEHFEFHNLPPLRTVTVHLYRETDKKKKKERNSYLGLVSLPAASVAGRQFVEKWYPVVTPNPKGGKGPGPMIRIKARYQTITILPMEMYKEFAEHITNHYLGLCAALEPILSAKTKEEMASALVHILQSTGKVKDFLTDLMMSEVDRCGDNEHLIFRENTLATKAIEEYLKLVGQKYLQDALGEFIKALYESDENCEVDPSKCSAADLPEHQGNLKMCCELAFCKIINSYCVFPRELKEVFASWRQECSSRGRPDISERLISASLFLRFLCPAIMSPSLFNLLQEYPDDRTARTLTLIAKVTQNLANFAKFGSKEEYMSFMNQFLEHEWTNMQRFLLEISNPETLSNTAGFEGYIDLGRELSSLHSLLWEAVSQLEQSIVSKLGPLPRILRDVHTALSTPGSGQLPGTNDLASTPGSGSSSISAGLQKMVIENDLSGLIDFTRLPSPTPENKDLFFVTRSSGVQPSPARSSSYSEANEPDLQMANGGKSLSMVDLQDARTLDGEAGSPAGPDVLPTDGQAAAAQLVAGWPARATPVNLAGLATVRRAGQTPTTPGTSEGAPGRPQLLAPLSFQNPVYQMAAGLPLSPRGLGDSGSEGHSSLSSHSNSEELAAAAKLGSFSTAAEELARRPGELARRQMSLTEKGGQPTVPRQNSAGPQRRIDQPPPPPPPPPPAPRGRTPPNLLSTLQYPRPSSGTLASASPDWVGPSTRLRQQSSSSKGDSPELKPRAVHKQGPSPVSPNALDRTAAWLLTMNAQLLEDEGLGPDPPHRDRLRSKDELSQAEKDLAVLQDKLRISTKKLEEYETLFKCQEETTQKLVLEYQARLEEGEERLRRQQEDKDIQMKGIISRLMSVEEELKKDHAEMQAAVDSKQKIIDAQEKRIASLDAANARLMSALTQLKERYSMQARNGISPTNPTKLQITENGEFRNSSNC.

The tract at residues 1–75 is disordered; that stretch reads MSAGGSARKS…EPSAATPFRV (75 aa). Residues 20–38 show a composition bias toward basic residues; it reads LLRRPRLQRQRSRSRSRTR. Residues 39 to 49 show a composition bias toward basic and acidic residues; the sequence is PARESPQERPG. A PH domain is found at 101 to 202; sequence SFRHILPGFR…WMENLRRAVH (102 aa). The C2 domain occupies 193–311; it reads WMENLRRAVH…AGRQFVEKWY (119 aa). The region spanning 387 to 595 is the Ras-GAP domain; that stretch reads GKVKDFLTDL…TNMQRFLLEI (209 aa). The interval 646–943 is necessary for interaction with AKT1; sequence LRDVHTALST…RTPPNLLSTL (298 aa). Residues 653-668 show a composition bias toward polar residues; it reads LSTPGSGQLPGTNDLA. Disordered stretches follow at residues 653-678 and 715-742; these read LSTP…SSSI and RSSG…MANG. The segment covering 669–678 has biased composition (low complexity); it reads STPGSGSSSI. Residues 715–731 are compositionally biased toward polar residues; the sequence is RSSGVQPSPARSSSYSE. Ser-728 carries the post-translational modification Phosphoserine; by MAP3K5 and RIPK1. Ser-747 is modified (phosphoserine). Disordered stretches follow at residues 803-823, 843-865, 895-998, 1015-1035, and 1164-1189; these read AGQT…PQLL, PRGL…NSEE, SLTE…SPNA, EDEG…KDEL, and RNGI…SSNC. Over residues 852–865 the composition is skewed to low complexity; it reads EGHSSLSSHSNSEE. The segment covering 919–931 has biased composition (pro residues); sequence QPPPPPPPPPPAP. 2 stretches are compositionally biased toward polar residues: residues 938–955 and 966–976; these read NLLS…TLAS and RLRQQSSSSKG. Phosphoserine is present on residues Ser-978 and Ser-995. A compositionally biased stretch (basic and acidic residues) spans 1023–1035; the sequence is PPHRDRLRSKDEL. Residues 1026 to 1159 are a coiled coil; sequence RDRLRSKDEL…SALTQLKERY (134 aa).

On plasma membrane, exists in an inactive form complexed with TNFR1; in response to TNF-alpha, dissociates from TNFR1 complex, translocates to cytoplasm and forms part of an intracellular signaling complex comprising TRADD, RIPK1, TRAF2 and MAP3K5. Interacts with DAB1. Interacts (via NPXY motif) with DAB2 (via PID domain). Interacts (via PH domain) with ERN1. Part of a cytoplasmic complex made of HIPK1, DAB2IP and MAP3K5 in response to TNF-alpha; this complex formation promotes MAP3K5-JNK activation and subsequent apoptosis. Interacts (via N-terminal domain) with JAK2; the interaction occurs in a IFNG/IFN-gamma-dependent manner and inhibits JAK2 autophosphorylation activity. Interacts (via C2 domain) with GSK3B; the interaction stimulates GSK3B kinase activation. Interacts (via C2 domain) with PPP2CA. Interacts (via proline-rich motif) with a regulatory p85 subunit (via SH3 domain) of the PI3K complex; the interaction inhibits the PI3K-AKT complex activity in a TNF-alpha-dependent manner in prostate cancer (PCa) cells. Interacts with AKT1; the interaction is increased in a TNF-alpha-induced manner. Interacts (via C2 domain and active form preferentially) with KDR/VEGFR2 (tyrosine-phosphorylated active form preferentially); the interaction occurs at the late phase of VEGFA response and inhibits KDR/VEGFR2 activity. Interacts (via N-terminus C2 domain) with MAP3K5 ('Ser-966' dephosphorylated form preferentially); the interaction occurs in a TNF-alpha-induced manner. Interacts (via Ras-GAP domain) with the catalytic subunit of protein phosphatase PP2A; the interaction occurs in resting endothelial cells, is further enhanced by TNF-alpha stimulation and is required to bridge PP2A to MAP3K5. Interacts (via C-terminus PER domain) with TRAF2 (via zinc fingers); the interaction occurs in a TNF-alpha-dependent manner. Interacts with 14-3-3 proteins; the interaction occurs in a TNF-alpha-dependent manner. Interacts (via Ras-GAP domain) with RIPK1 (via kinase domain); the interaction occurs in a TNF-alpha-dependent manner. Interacts with RAB40C; acts as a GAP for RAB40C. In response to TNF-alpha-induction, phosphorylated at Ser-728; phosphorylation leads to a conformational change, and thus, increases its association with 14-3-3 proteins, MAP3K5, RIPK1 and TRAF2 in endothelial cells; also stimulates regulatory p85 subunit sequestring and PI3K-p85 complex activity inhibition. As to expression, expressed in endothelial and vascular smooth muscle cells (VSMCs). Expressed in prostate epithelial but poorly in prostate cancer cells. Poorly expressed in medulloblastoma cells compared to cerebellar precursor proliferating progenitor cells (at protein level). Low expression in prostate. Down-regulated in prostate cancer.

The protein localises to the cytoplasm. The protein resides in the cell membrane. Its subcellular location is the membrane. It localises to the cell projection. It is found in the dendrite. In terms of biological role, functions as a scaffold protein implicated in the regulation of a large spectrum of both general and specialized signaling pathways. Involved in several processes such as innate immune response, inflammation and cell growth inhibition, apoptosis, cell survival, angiogenesis, cell migration and maturation. Also plays a role in cell cycle checkpoint control; reduces G1 phase cyclin levels resulting in G0/G1 cell cycle arrest. Mediates signal transduction by receptor-mediated inflammatory signals, such as the tumor necrosis factor (TNF), interferon (IFN) or lipopolysaccharide (LPS). Modulates the balance between phosphatidylinositol 3-kinase (PI3K)-AKT-mediated cell survival and apoptosis stimulated kinase (MAP3K5)-JNK signaling pathways; sequesters both AKT1 and MAP3K5 and counterbalances the activity of each kinase by modulating their phosphorylation status in response to pro-inflammatory stimuli. Acts as a regulator of the endoplasmic reticulum (ER) unfolded protein response (UPR) pathway; specifically involved in transduction of the ER stress-response to the JNK cascade through ERN1. Mediates TNF-alpha-induced apoptosis activation by facilitating dissociation of inhibitor 14-3-3 from MAP3K5; recruits the PP2A phosphatase complex which dephosphorylates MAP3K5 on 'Ser-966', leading to the dissociation of 13-3-3 proteins and activation of the MAP3K5-JNK signaling pathway in endothelial cells. Also mediates TNF/TRAF2-induced MAP3K5-JNK activation, while it inhibits CHUK-NF-kappa-B signaling. Acts a negative regulator in the IFN-gamma-mediated JAK-STAT signaling cascade by inhibiting smooth muscle cell (VSMCs) proliferation and intimal expansion, and thus, prevents graft arteriosclerosis (GA). Acts as a GTPase-activating protein (GAP) for the ADP ribosylation factor 6 (ARF6), Ras and RAB40C. Promotes hydrolysis of the ARF6-bound GTP and thus, negatively regulates phosphatidylinositol 4,5-bisphosphate (PIP2)-dependent TLR4-TIRAP-MyD88 and NF-kappa-B signaling pathways in endothelial cells in response to lipopolysaccharides (LPS). Binds specifically to phosphatidylinositol 4-phosphate (PtdIns4P) and phosphatidylinositol 3-phosphate (PtdIns3P). In response to vascular endothelial growth factor (VEGFA), acts as a negative regulator of the VEGFR2-PI3K-mediated angiogenic signaling pathway by inhibiting endothelial cell migration and tube formation. In the developing brain, promotes both the transition from the multipolar to the bipolar stage and the radial migration of cortical neurons from the ventricular zone toward the superficial layer of the neocortex in a glial-dependent locomotion process. Probable downstream effector of the Reelin signaling pathway; promotes Purkinje cell (PC) dendrites development and formation of cerebellar synapses. Also functions as a tumor suppressor protein in prostate cancer progression; prevents cell proliferation and epithelial-to-mesenchymal transition (EMT) through activation of the glycogen synthase kinase-3 beta (GSK3B)-induced beta-catenin and inhibition of PI3K-AKT and Ras-MAPK survival downstream signaling cascades, respectively. This is Disabled homolog 2-interacting protein from Homo sapiens (Human).